The primary structure comprises 707 residues: Ribosomal RNA large subunit methyltransferase K/L (707 aa).

In terms of domain architecture, THUMP spans 43-154 (QIYRCCLWSR…KDKAILGVDM (112 aa)).

It belongs to the methyltransferase superfamily. RlmKL family.

It is found in the cytoplasm. It catalyses the reaction guanosine(2445) in 23S rRNA + S-adenosyl-L-methionine = N(2)-methylguanosine(2445) in 23S rRNA + S-adenosyl-L-homocysteine + H(+). It carries out the reaction guanosine(2069) in 23S rRNA + S-adenosyl-L-methionine = N(2)-methylguanosine(2069) in 23S rRNA + S-adenosyl-L-homocysteine + H(+). In terms of biological role, specifically methylates the guanine in position 2445 (m2G2445) and the guanine in position 2069 (m7G2069) of 23S rRNA. This Vibrio campbellii (strain ATCC BAA-1116) protein is Ribosomal RNA large subunit methyltransferase K/L.